The primary structure comprises 354 residues: Uroporphyrinogen decarboxylase (354 aa).

Residues 27 to 31 (RQAGR), aspartate 77, tyrosine 154, threonine 209, and histidine 327 contribute to the substrate site.

The protein belongs to the uroporphyrinogen decarboxylase family. In terms of assembly, homodimer.

Its subcellular location is the cytoplasm. The enzyme catalyses uroporphyrinogen III + 4 H(+) = coproporphyrinogen III + 4 CO2. Its pathway is porphyrin-containing compound metabolism; protoporphyrin-IX biosynthesis; coproporphyrinogen-III from 5-aminolevulinate: step 4/4. Catalyzes the decarboxylation of four acetate groups of uroporphyrinogen-III to yield coproporphyrinogen-III. This chain is Uroporphyrinogen decarboxylase, found in Escherichia coli (strain UTI89 / UPEC).